A 69-amino-acid chain; its full sequence is Pancreatic secretory trypsin inhibitor (69 aa).

One can recognise a Kazal-like domain in the interval 8–65; it reads TGTEAACSNYDLKKGCAKIFDPVCGTDNILYSNECLLCFQNLQRKTNVRIKRRGTCQE. Disulfide bonds link Cys-14-Cys-45, Cys-23-Cys-42, and Cys-31-Cys-63.

It localises to the secreted. This is a trypsin inhibitor, its physiological function is to prevent the trypsin-catalyzed premature activation of zymogens within the pancreas. This is Pancreatic secretory trypsin inhibitor (SPINK1) from Struthio camelus (Common ostrich).